A 300-amino-acid polypeptide reads, in one-letter code: 33 kDa chaperonin (300 aa).

Intrachain disulfides connect Cys-235–Cys-237 and Cys-269–Cys-272.

This sequence belongs to the HSP33 family. Under oxidizing conditions two disulfide bonds are formed involving the reactive cysteines. Under reducing conditions zinc is bound to the reactive cysteines and the protein is inactive.

It is found in the cytoplasm. In terms of biological role, redox regulated molecular chaperone. Protects both thermally unfolding and oxidatively damaged proteins from irreversible aggregation. Plays an important role in the bacterial defense system toward oxidative stress. In Pseudomonas fluorescens (strain SBW25), this protein is 33 kDa chaperonin.